The chain runs to 349 residues: Ion-translocating oxidoreductase complex subunit D (349 aa).

3 helical membrane-spanning segments follow: residues 20 to 42 (VMQR…FGWG), 77 to 99 (SAML…WMIV), and 124 to 144 (AMAA…TWIA). FMN phosphoryl threonine is present on Thr185. Helical transmembrane passes span 212-232 (STGV…LVLL), 239-259 (WHIS…GFLL), 265-285 (ASPL…FIAT), 291-311 (ATSP…VYII), and 315-335 (GGYP…APFI).

Belongs to the NqrB/RnfD family. The complex is composed of six subunits: RnfA, RnfB, RnfC, RnfD, RnfE and RnfG. FMN serves as cofactor.

The protein resides in the cell inner membrane. Its function is as follows. Part of a membrane-bound complex that couples electron transfer with translocation of ions across the membrane. The sequence is that of Ion-translocating oxidoreductase complex subunit D from Shewanella baltica (strain OS195).